The sequence spans 1045 residues: Fibrosin-1-like protein (1045 aa).

A compositionally biased stretch (basic residues) spans 1–12; the sequence is MEAKVRPSRRSR. Disordered regions lie at residues 1–86 and 99–315; these read MEAK…DGFA and DMAL…THVP. A compositionally biased stretch (basic and acidic residues) spans 13-28; it reads AQRDRGRRREAARDAR. Residues 48–63 show a composition bias toward low complexity; sequence GLRGAPPRGAAPAPRT. Basic and acidic residues predominate over residues 99–123; sequence DMALKPHERKEKWERRLIKKPRESE. Polar residues predominate over residues 183 to 197; sequence EATSSRDPLSDSSAH. A compositionally biased stretch (pro residues) spans 270–280; sequence HAAPCPGPPPG. Ser-340 bears the Phosphoserine mark. A compositionally biased stretch (basic residues) spans 443 to 457; it reads QHTHQHTHQHTHQHQ. Disordered stretches follow at residues 443 to 462 and 719 to 753; these read QHTH…TFAP and EGSS…PKSV. Pro residues predominate over residues 741 to 750; the sequence is PSFPAPPPWP. Ser-790 carries the phosphoserine modification. 2 disordered regions span residues 809-880 and 910-961; these read ELGR…APLQ and AAAP…PALD. Residues 817–837 show a composition bias toward basic and acidic residues; the sequence is AEREAEPRVKESRSPAKEEAA. Residue Lys-858 forms a Glycyl lysine isopeptide (Lys-Gly) (interchain with G-Cter in SUMO2) linkage. Residues 910-922 are compositionally biased toward low complexity; it reads AAAPAPGSAALLE. Residues 923–949 are compositionally biased toward basic and acidic residues; the sequence is PPERPYRDREPHGYSPERLRGELERAR. Residues Ser-937 and Ser-977 each carry the phosphoserine modification. Thr-989 and Thr-1010 each carry phosphothreonine. A disordered region spans residues 991-1045; sequence PAAAALGAPPPLVTAAGPPTPPGPPRSRTTPLGGLGPGEARDYSPSRNPPEVEAR. The span at 998-1015 shows a compositional bias: pro residues; it reads APPPLVTAAGPPTPPGPP. The span at 1029 to 1045 shows a compositional bias: basic and acidic residues; the sequence is EARDYSPSRNPPEVEAR.

This sequence belongs to the AUTS2 family.

This is Fibrosin-1-like protein (FBRSL1) from Homo sapiens (Human).